Here is a 408-residue protein sequence, read N- to C-terminus: MGRRGVTKKRNRIDRVKTRVVVLGSTGSIGTQALEVMADNPERFELVGISAHGSKPDVLAQQVRDFGLDLGRVAVASEHTAEWLDGEFGAHCIRGKDSARELVEAVGPELGECDVILNALVGSLGLDATLATLGTKAKLALANKESLVAGGQLVLKAADEGQLIPVDSEHSAMAQCLRSGRVDEVDSLVLTASGGPFRGYTRAQLEDVTPLQAANHPTWSMGQMNTLNSATMVNKGLELIEASLLFGIPAEKIDVTVHPQSIVHSMVTFIDGATIAQASPPSMKLPISLALGWPDRIADAQPKLDFTEATDWHFEPLDDEVFPAVILARQAVTAGGTMPAVYNAANEEAAVEFLNGRLSFPRIVDTVAATMEACQHLSAEPNDLEDVLAAEREARAKAHERMATWLSD.

T26, G27, S28, I29, and N143 together coordinate NADPH. 1-deoxy-D-xylulose 5-phosphate is bound at residue K144. Position 145 (E145) interacts with NADPH. D167 provides a ligand contact to Mn(2+). 1-deoxy-D-xylulose 5-phosphate-binding residues include S168, E169, S193, and H216. E169 lines the Mn(2+) pocket. Residue G222 coordinates NADPH. 1-deoxy-D-xylulose 5-phosphate is bound by residues S229, N234, K235, and E238. A Mn(2+)-binding site is contributed by E238.

The protein belongs to the DXR family. It depends on Mg(2+) as a cofactor. Mn(2+) is required as a cofactor.

The enzyme catalyses 2-C-methyl-D-erythritol 4-phosphate + NADP(+) = 1-deoxy-D-xylulose 5-phosphate + NADPH + H(+). It functions in the pathway isoprenoid biosynthesis; isopentenyl diphosphate biosynthesis via DXP pathway; isopentenyl diphosphate from 1-deoxy-D-xylulose 5-phosphate: step 1/6. Its function is as follows. Catalyzes the NADPH-dependent rearrangement and reduction of 1-deoxy-D-xylulose-5-phosphate (DXP) to 2-C-methyl-D-erythritol 4-phosphate (MEP). The protein is 1-deoxy-D-xylulose 5-phosphate reductoisomerase of Corynebacterium jeikeium (strain K411).